Here is a 297-residue protein sequence, read N- to C-terminus: Ribosomal RNA small subunit methyltransferase A (297 aa).

Asparagine 31, leucine 33, glycine 58, glutamate 79, aspartate 104, and asparagine 129 together coordinate S-adenosyl-L-methionine.

It belongs to the class I-like SAM-binding methyltransferase superfamily. rRNA adenine N(6)-methyltransferase family. RsmA subfamily.

Its subcellular location is the cytoplasm. The enzyme catalyses adenosine(1518)/adenosine(1519) in 16S rRNA + 4 S-adenosyl-L-methionine = N(6)-dimethyladenosine(1518)/N(6)-dimethyladenosine(1519) in 16S rRNA + 4 S-adenosyl-L-homocysteine + 4 H(+). Specifically dimethylates two adjacent adenosines (A1518 and A1519) in the loop of a conserved hairpin near the 3'-end of 16S rRNA in the 30S particle. May play a critical role in biogenesis of 30S subunits. In Staphylococcus aureus (strain Mu3 / ATCC 700698), this protein is Ribosomal RNA small subunit methyltransferase A.